We begin with the raw amino-acid sequence, 346 residues long: Methionine import ATP-binding protein MetN 1 (346 aa).

In terms of domain architecture, ABC transporter spans 2 to 241 (IELKNVSKVF…PQHVTTKKFV (240 aa)). 38–45 (GYSGAGKS) is a binding site for ATP.

The protein belongs to the ABC transporter superfamily. Methionine importer (TC 3.A.1.24) family. The complex is composed of two ATP-binding proteins (MetN), two transmembrane proteins (MetI) and a solute-binding protein (MetQ).

It localises to the cell membrane. The catalysed reaction is L-methionine(out) + ATP + H2O = L-methionine(in) + ADP + phosphate + H(+). The enzyme catalyses D-methionine(out) + ATP + H2O = D-methionine(in) + ADP + phosphate + H(+). Its function is as follows. Part of the ABC transporter complex MetNIQ involved in methionine import. Responsible for energy coupling to the transport system. The polypeptide is Methionine import ATP-binding protein MetN 1 (Bacillus cereus (strain ATCC 14579 / DSM 31 / CCUG 7414 / JCM 2152 / NBRC 15305 / NCIMB 9373 / NCTC 2599 / NRRL B-3711)).